The following is a 442-amino-acid chain: Signal recognition particle 54 kDa protein (442 aa).

GTP contacts are provided by residues 106-113 (GLQGSGKT), 186-190 (DTAGR), and 244-247 (TKLD).

The protein belongs to the GTP-binding SRP family. SRP54 subfamily. As to quaternary structure, part of the signal recognition particle protein translocation system, which is composed of SRP and FtsY. Archaeal SRP consists of a 7S RNA molecule of 300 nucleotides and two protein subunits: SRP54 and SRP19.

It is found in the cytoplasm. It carries out the reaction GTP + H2O = GDP + phosphate + H(+). Its function is as follows. Involved in targeting and insertion of nascent membrane proteins into the cytoplasmic membrane. Binds to the hydrophobic signal sequence of the ribosome-nascent chain (RNC) as it emerges from the ribosomes. The SRP-RNC complex is then targeted to the cytoplasmic membrane where it interacts with the SRP receptor FtsY. This Methanothermobacter thermautotrophicus (strain ATCC 29096 / DSM 1053 / JCM 10044 / NBRC 100330 / Delta H) (Methanobacterium thermoautotrophicum) protein is Signal recognition particle 54 kDa protein.